A 330-amino-acid chain; its full sequence is Diacylglycerol acyltransferase/mycolyltransferase Ag85A (330 aa).

The signal sequence occupies residues 1-42 (MKFVDRFRGAVAGMLRRLVVEAMGVALLSALIGVVGSAPAEA). 84-85 (LR) is a substrate binding site. The fibronectin-binding stretch occupies residues 100–110 (FEWYYQSGISV). The cysteines at positions 129 and 134 are disulfide-linked. Substrate-binding residues include Ser-168 and Asp-196. Catalysis depends on Ser-168, which acts as the Nucleophile. Glu-272 is a catalytic residue. Residues 274–277 (LVRT), Lys-281, and 304–306 (HSW) each bind substrate. His-304 is an active-site residue.

This sequence belongs to the mycobacterial A85 antigen family. As to quaternary structure, homodimer.

Its subcellular location is the secreted. It localises to the cell wall. The protein localises to the cytoplasm. It catalyses the reaction an acyl-CoA + a 1,2-diacyl-sn-glycerol = a triacyl-sn-glycerol + CoA. The enzyme catalyses 2 alpha,alpha'-trehalose 6-mycolate = alpha,alpha'-trehalose 6,6'-bismycolate + alpha,alpha-trehalose. Its function is as follows. The antigen 85 proteins (FbpA, FbpB, FbpC) are responsible for the high affinity of mycobacteria for fibronectin, a large adhesive glycoprotein, which facilitates the attachment of M.tuberculosis to murine alveolar macrophages (AMs). They also help to maintain the integrity of the cell wall by catalyzing the transfer of mycolic acids to cell wall arabinogalactan, and through the synthesis of alpha,alpha-trehalose dimycolate (TDM, cord factor). They catalyze the transfer of a mycoloyl residue from one molecule of alpha,alpha-trehalose monomycolate (TMM) to another TMM, leading to the formation of TDM. FbpA mediates triacylglycerol (TAG) formation with long-chain acyl-CoA as the acyl donor and 1,2-dipalmitoyl-sn-glycerol (1,2-dipalmitin) as the acyl acceptor. It has a preference for C26:0-CoA over C18:1-CoA. The polypeptide is Diacylglycerol acyltransferase/mycolyltransferase Ag85A (fbpA) (Mycobacterium leprae (strain TN)).